The chain runs to 593 residues: Solute carrier family 40 member 3, chloroplastic (593 aa).

Residues 1-23 are disordered; it reads MSMSKLLSPPPTSPPGPALSRLP. A chloroplast-targeting transit peptide spans 1 to 51; it reads MSMSKLLSPPPTSPPGPALSRLPCRRVAPPPVLPFPFPLRRLTSRRVFATS. Residues 8-17 are compositionally biased toward pro residues; the sequence is SPPPTSPPGP. 11 helical membrane passes run 181-201, 219-239, 253-273, 303-322, 323-343, 403-423, 431-451, 462-482, 493-513, 530-550, and 557-577; these read ILPVAVLGFFTKLVVFAAGPL, AAIQTAAHLVSVATITYAFAV, FAVLVASTAVDRLACVALGII, LLCETVGASIFALLLSKNNP, LTCIKLSCVISLCALPLLIFL, YVFVCFNVALAPGALMTTFLI, VIGAFGGSSGAVGILATFATA, AGAAGLIAQSALLGAAVVVYL, LFAFLGLIVASRAGHMAYSAI, IGATEIAVASLAELAMMAVAV, and HFGALAALSATAVTAAAGMYC.

It belongs to the ferroportin (FP) (TC 2.A.100) family. SLC40A subfamily.

Its subcellular location is the membrane. It is found in the plastid. It localises to the chloroplast envelope. Its function is as follows. May be involved in iron transport and iron homeostasis. The polypeptide is Solute carrier family 40 member 3, chloroplastic (Oryza sativa subsp. japonica (Rice)).